The primary structure comprises 402 residues: Phosphoglycerate kinase (402 aa).

Substrate contacts are provided by residues 30–32, Arg46, 70–73, Arg126, and Arg159; these read DFN and HLGR. Residues Lys210, Glu332, and 358–361 contribute to the ATP site; that span reads GGDT.

This sequence belongs to the phosphoglycerate kinase family. In terms of assembly, monomer.

The protein resides in the cytoplasm. The enzyme catalyses (2R)-3-phosphoglycerate + ATP = (2R)-3-phospho-glyceroyl phosphate + ADP. It functions in the pathway carbohydrate degradation; glycolysis; pyruvate from D-glyceraldehyde 3-phosphate: step 2/5. This Helicobacter hepaticus (strain ATCC 51449 / 3B1) protein is Phosphoglycerate kinase.